The primary structure comprises 695 residues: NADPH--cytochrome P450 reductase (695 aa).

Residues 1 to 8 (MAQLDTLD) are Lumenal-facing. Residues 9 to 31 (LVVLVALLVGSVAYFTKGTYWAV) traverse the membrane as a helical segment. Topologically, residues 32 to 695 (AKDPYASSGP…SGSYQEDVWS (664 aa)) are cytoplasmic. The region spanning 66 to 221 (CVIFYGSQTG…DFLAWKEPMW (156 aa)) is the Flavodoxin-like domain. Residues 72–77 (SQTGTA), 123–126 (ATYG), 169–178 (LGNNTYEHYN), and D204 each bind FMN. The 262-residue stretch at 277–538 (HNPFIAPIVE…HVRHSNFKLP (262 aa)) folds into the FAD-binding FR-type domain. R296 contacts NADP(+). FAD is bound by residues 451–454 (RYYS), 469–471 (TAV), and 486–489 (GVTT). Residues T552, 614–615 (SR), 620–624 (KVYVQ), and E656 contribute to the NADP(+) site. W694 is an FAD binding site.

This sequence belongs to the NADPH--cytochrome P450 reductase family. In the N-terminal section; belongs to the flavodoxin family. The protein in the C-terminal section; belongs to the flavoprotein pyridine nucleotide cytochrome reductase family. Requires FAD as cofactor. FMN serves as cofactor.

Its subcellular location is the endoplasmic reticulum membrane. The protein resides in the mitochondrion outer membrane. The protein localises to the cell membrane. It carries out the reaction 2 oxidized [cytochrome P450] + NADPH = 2 reduced [cytochrome P450] + NADP(+) + H(+). Functionally, this enzyme is required for electron transfer from NADP to cytochrome P450 in microsomes. It can also provide electron transfer to heme oxygenase and cytochrome B5. Involved in ergosterol biosynthesis. This chain is NADPH--cytochrome P450 reductase, found in Aspergillus oryzae (strain ATCC 42149 / RIB 40) (Yellow koji mold).